The following is a 240-amino-acid chain: uncharacterized protein (240 aa).

Residues 26-52 (DYVDDGESLPTRQSVKNQREQKKKQGK) are disordered. A helical membrane pass occupies residues 57–77 (LFTVLAVIFVFVPVIVLVTLF). Residues 100 to 185 (KYEVVPKSED…QPAEPVQNVP (86 aa)) are disordered. The segment covering 103-159 (VVPKSEDKNDTADTKETALQKESKKEPEDSKPKEQTAADKKQTAVAEKEDSPNKEEA) has biased composition (basic and acidic residues). The span at 160 to 185 (TAAAASSSQSTVQQQEQPAEPVQNVP) shows a compositional bias: low complexity. The LysM domain maps to 189–235 (VKHTVQKKETLYRISMKYYKSRTGEEKIRAYNHLNGNDVYTGQVLDI).

The protein localises to the membrane. This is an uncharacterized protein from Bacillus subtilis (strain 168).